Here is a 529-residue protein sequence, read N- to C-terminus: Neuronal acetylcholine receptor subunit alpha-2 (529 aa).

The first 26 residues, 1–26, serve as a signal peptide directing secretion; the sequence is MGPSCPVFLSFTKLSLWWLLLTPAGG. Residues 27–56 are disordered; the sequence is EEAKRPPPRAPGDPLSSPSPTALPQGGSHT. Residues 27 to 264 are Extracellular-facing; it reads EEAKRPPPRA…VTYAFVIRRL (238 aa). 2 N-linked (GlcNAc...) asparagine glycosylation sites follow: N79 and N129. A disulfide bridge connects residues C183 and C197. Residue N235 is glycosylated (N-linked (GlcNAc...) asparagine). C247 and C248 are oxidised to a cystine. A run of 3 helical transmembrane segments spans residues 265 to 289, 297 to 315, and 331 to 352; these read PLFY…VFYL, ITLC…LLIT, and YLLF…VLNV. The Cytoplasmic portion of the chain corresponds to 353 to 502; it reads HHRSPSTHTM…WKYVAMVIDR (150 aa). The helical transmembrane segment at 503-521 threads the bilayer; that stretch reads IFLWLFIIVCFLGTIGLFL.

It belongs to the ligand-gated ion channel (TC 1.A.9) family. Acetylcholine receptor (TC 1.A.9.1) subfamily. Alpha-2/CHRNA2 sub-subfamily. Neuronal AChR is composed of two different types of subunits: alpha and non-alpha (beta). CHRNA2/alpha-2 subunit can be combined to CHRNB2/beta-2 or CHRNB4/beta-4 to give rise to functional receptors. Both CHRNA2:CHRNB2 and CHRNA2:CHRNB4 nAChR complexes are heteropentamers with two subtypes: LS (low agonist sensitivity) with a (CHRNA2)3:(CHRNB2/4)2 and HS (high agonist sensitivity) with a (CHRNA2)2:(CHRNB2/4)3 stoichiometries; the subtypes differ in their subunit binding interfaces which are involved in ligand binding.

Its subcellular location is the synaptic cell membrane. It is found in the cell membrane. The catalysed reaction is Ca(2+)(in) = Ca(2+)(out). It catalyses the reaction K(+)(in) = K(+)(out). The enzyme catalyses Na(+)(in) = Na(+)(out). Its function is as follows. Component of neuronal acetylcholine receptors (nAChRs) that function as pentameric, ligand-gated cation channels with high calcium permeability among other activities. nAChRs are excitatory neurotrasnmitter receptors formed by a collection of nAChR subunits known to mediate synaptic transmission in the nervous system and the neuromuscular junction. Each nAchR subunit confers differential attributes to channel properties, including activation, deactivation and desensitization kinetics, pH sensitivity, cation permeability, and binding to allosteric modulators. CHRNA2 forms heteropentameric neuronal acetylcholine receptors with CHRNB2 and CHRNB4 and plays a role in nicotine dependence. This is Neuronal acetylcholine receptor subunit alpha-2 from Homo sapiens (Human).